A 449-amino-acid chain; its full sequence is Na(+)-translocating NADH-quinone reductase subunit A (449 aa).

The protein belongs to the NqrA family. Composed of six subunits; NqrA, NqrB, NqrC, NqrD, NqrE and NqrF.

The enzyme catalyses a ubiquinone + n Na(+)(in) + NADH + H(+) = a ubiquinol + n Na(+)(out) + NAD(+). NQR complex catalyzes the reduction of ubiquinone-1 to ubiquinol by two successive reactions, coupled with the transport of Na(+) ions from the cytoplasm to the periplasm. NqrA to NqrE are probably involved in the second step, the conversion of ubisemiquinone to ubiquinol. The polypeptide is Na(+)-translocating NADH-quinone reductase subunit A (Actinobacillus pleuropneumoniae serotype 3 (strain JL03)).